We begin with the raw amino-acid sequence, 148 residues long: Large ribosomal subunit protein bL9 (148 aa).

This sequence belongs to the bacterial ribosomal protein bL9 family.

Its function is as follows. Binds to the 23S rRNA. In Salinispora tropica (strain ATCC BAA-916 / DSM 44818 / JCM 13857 / NBRC 105044 / CNB-440), this protein is Large ribosomal subunit protein bL9.